Consider the following 911-residue polypeptide: Gag-Pro polyprotein (911 aa).

A propeptide spanning residues 101-161 (AAVAQTEEIL…TKKPKRFPVL (61 aa)) is cleaved from the precursor. Composition is skewed to polar residues over residues 113-125 (NSQTDLTKTSQNP) and 140-152 (KSSSLQDKGLSST). The interval 113–178 (NSQTDLTKTS…DPEDPNPSEV (66 aa)) is disordered. The short motif at 202 to 205 (PPPY) is the PPXY motif element. The PTAP/PSAP motif motif lies at 210–213 (PSAP). Positions 216–257 (MAVVNPKEELKEKIAQLEEQIKLEELHQALISKLQKLKTGNE) form a coiled coil. Residues 260–279 (THPDTAGGLSRTPHWPGQHI) are disordered. 2 consecutive CCHC-type zinc fingers follow at residues 547-564 (GCCFKCGKKGHFAKNCHE) and 576-593 (GLCPRCKRGKHWANECKS). The interval 592 to 626 (KSKTDNQGNPIPPHQGNRVEGPAPGPETSLWGSQL) is disordered. A Peptidase A2 domain is found at 780–856 (FTGLIDTGAD…LPVNLWGRDL (77 aa)). The active-site Protease; shared with dimeric partner is Asp-785. The region spanning 867 to 911 (PNDIVTAQMLAQGYSPGKGLGKKENGILHPIPNQGQSNKKGFGNF) is the G-patch domain.

In terms of assembly, homodimer. Interacts with the reverse transcriptase/ribonuclease H. As to quaternary structure, homotrimer. Post-translationally, released by autocatalytic processing. The protease can undergo further autoprocessing to yield 2 shorter but enzymatically active forms of 12 kDa and 13 kDa without the GDP domain. the 12 kDa form is monomeric. Myristoylated. Myristoylation of the matrix (MA) domain mediates the transport and binding of Gag polyproteins to the host plasma membrane and is required for the assembly of viral particles. In terms of processing, specific enzymatic cleavages in vivo yield mature proteins.

It localises to the virion. The catalysed reaction is dUTP + H2O = dUMP + diphosphate + H(+). Its function is as follows. Matrix protein. In terms of biological role, nucleocapsid protein p14: Nucleocapsid protein. Functionally, capsid protein. The aspartyl protease mediates proteolytic cleavages of Gag and Gag-Pol polyproteins during or shortly after the release of the virion from the plasma membrane. Cleavages take place as an ordered, step-wise cascade to yield mature proteins. This process is called maturation. Displays maximal activity during the budding process just prior to particle release from the cell. Its function is as follows. Enhances the activity of the reverse transcriptase. May be part of the mature RT. In Mason-Pfizer monkey virus (MPMV), this protein is Gag-Pro polyprotein (gag-pro).